The primary structure comprises 262 residues: Cyclin-dependent kinase inhibitor 1 (262 aa).

The disordered stretch occupies residues 140–212; that stretch reads SDVAEAGSEH…SAQQATRPKI (73 aa). Basic and acidic residues predominate over residues 160–169; the sequence is SGRDRERRET. Low complexity predominate over residues 198–208; sequence SAATASAQQAT.

The protein belongs to the CDI family. ICK/KRP subfamily. Expressed in roots, stems, leaves and apex.

Its function is as follows. Regulates the production of endosperm cells, affecting seed filling and embryo development. Regulates endoreduplication of endosperm cells. May play a role in the exit from the mitotic cell cycle during rice grain formation. Inhibitis leaf elongation rates by decreasing cell number, that is partly compensated by increased cell size. May not affect growth rate or cell size of the primary root. In Oryza sativa subsp. japonica (Rice), this protein is Cyclin-dependent kinase inhibitor 1 (KRP1).